A 388-amino-acid polypeptide reads, in one-letter code: Succinate--CoA ligase [ADP-forming] subunit beta (388 aa).

The ATP-grasp domain maps to Lys9–Leu244. ATP-binding positions include Lys46, Gly53 to Gly55, Glu99, Ala102, and Glu107. Mg(2+) contacts are provided by Asn199 and Asp213. Substrate-binding positions include Asn264 and Gly321–Val323.

The protein belongs to the succinate/malate CoA ligase beta subunit family. In terms of assembly, heterotetramer of two alpha and two beta subunits. Mg(2+) is required as a cofactor.

It catalyses the reaction succinate + ATP + CoA = succinyl-CoA + ADP + phosphate. The enzyme catalyses GTP + succinate + CoA = succinyl-CoA + GDP + phosphate. The protein operates within carbohydrate metabolism; tricarboxylic acid cycle; succinate from succinyl-CoA (ligase route): step 1/1. Its function is as follows. Succinyl-CoA synthetase functions in the citric acid cycle (TCA), coupling the hydrolysis of succinyl-CoA to the synthesis of either ATP or GTP and thus represents the only step of substrate-level phosphorylation in the TCA. The beta subunit provides nucleotide specificity of the enzyme and binds the substrate succinate, while the binding sites for coenzyme A and phosphate are found in the alpha subunit. In Glaesserella parasuis serovar 5 (strain SH0165) (Haemophilus parasuis), this protein is Succinate--CoA ligase [ADP-forming] subunit beta.